The following is a 562-amino-acid chain: Dihydroxy-acid dehydratase (562 aa).

Residue C51 coordinates [2Fe-2S] cluster. D83 is a binding site for Mg(2+). Residue C124 participates in [2Fe-2S] cluster binding. 2 residues coordinate Mg(2+): D125 and K126. Residue K126 is modified to N6-carboxylysine. C196 is a [2Fe-2S] cluster binding site. Residue E448 participates in Mg(2+) binding. The Proton acceptor role is filled by S474.

The protein belongs to the IlvD/Edd family. Homodimer. Requires [2Fe-2S] cluster as cofactor. It depends on Mg(2+) as a cofactor.

The catalysed reaction is (2R)-2,3-dihydroxy-3-methylbutanoate = 3-methyl-2-oxobutanoate + H2O. It catalyses the reaction (2R,3R)-2,3-dihydroxy-3-methylpentanoate = (S)-3-methyl-2-oxopentanoate + H2O. It functions in the pathway amino-acid biosynthesis; L-isoleucine biosynthesis; L-isoleucine from 2-oxobutanoate: step 3/4. Its pathway is amino-acid biosynthesis; L-valine biosynthesis; L-valine from pyruvate: step 3/4. Functionally, functions in the biosynthesis of branched-chain amino acids. Catalyzes the dehydration of (2R,3R)-2,3-dihydroxy-3-methylpentanoate (2,3-dihydroxy-3-methylvalerate) into 2-oxo-3-methylpentanoate (2-oxo-3-methylvalerate) and of (2R)-2,3-dihydroxy-3-methylbutanoate (2,3-dihydroxyisovalerate) into 2-oxo-3-methylbutanoate (2-oxoisovalerate), the penultimate precursor to L-isoleucine and L-valine, respectively. The protein is Dihydroxy-acid dehydratase of Pyrobaculum aerophilum (strain ATCC 51768 / DSM 7523 / JCM 9630 / CIP 104966 / NBRC 100827 / IM2).